The primary structure comprises 205 residues: Ribonuclease HII (205 aa).

Positions 15-205 constitute an RNase H type-2 domain; that stretch reads SQVCGIDEAG…SFKLRKLGEK (191 aa). Residues Asp21, Glu22, and Asp117 each coordinate a divalent metal cation.

The protein belongs to the RNase HII family. Requires Mn(2+) as cofactor. Mg(2+) serves as cofactor.

Its subcellular location is the cytoplasm. The catalysed reaction is Endonucleolytic cleavage to 5'-phosphomonoester.. Endonuclease that specifically degrades the RNA of RNA-DNA hybrids. The sequence is that of Ribonuclease HII from Chlorobaculum tepidum (strain ATCC 49652 / DSM 12025 / NBRC 103806 / TLS) (Chlorobium tepidum).